Here is a 438-residue protein sequence, read N- to C-terminus: Probable inactive protein kinase 38 (438 aa).

The Protein kinase domain maps to 77-340 (PRFRLALGKG…FTELQPQYFL (264 aa)).

This sequence belongs to the protein kinase superfamily. Tyr protein kinase family.

The protein is Probable inactive protein kinase 38 (36) of Equus caballus (Horse).